Consider the following 299-residue polypeptide: tRNA dimethylallyltransferase (299 aa).

11–18 (GPTAVGKT) is a binding site for ATP. 13–18 (TAVGKT) contacts substrate. The interaction with substrate tRNA stretch occupies residues 36 to 39 (DSQQ).

It belongs to the IPP transferase family. In terms of assembly, monomer. Mg(2+) is required as a cofactor.

It catalyses the reaction adenosine(37) in tRNA + dimethylallyl diphosphate = N(6)-dimethylallyladenosine(37) in tRNA + diphosphate. Catalyzes the transfer of a dimethylallyl group onto the adenine at position 37 in tRNAs that read codons beginning with uridine, leading to the formation of N6-(dimethylallyl)adenosine (i(6)A). This is tRNA dimethylallyltransferase from Streptococcus pyogenes serotype M18 (strain MGAS8232).